The following is a 159-amino-acid chain: Phosphopantetheine adenylyltransferase (159 aa).

Ser9 contacts substrate. ATP is bound by residues 9–10 (SF) and His17. Lys41, Leu73, and Lys87 together coordinate substrate. ATP is bound by residues 88-90 (GLR), Glu98, and 123-129 (YSYLSSS).

It belongs to the bacterial CoaD family. In terms of assembly, homohexamer. The cofactor is Mg(2+).

The protein resides in the cytoplasm. It carries out the reaction (R)-4'-phosphopantetheine + ATP + H(+) = 3'-dephospho-CoA + diphosphate. It functions in the pathway cofactor biosynthesis; coenzyme A biosynthesis; CoA from (R)-pantothenate: step 4/5. Reversibly transfers an adenylyl group from ATP to 4'-phosphopantetheine, yielding dephospho-CoA (dPCoA) and pyrophosphate. The sequence is that of Phosphopantetheine adenylyltransferase from Clostridium botulinum (strain Alaska E43 / Type E3).